The primary structure comprises 63 residues: Protein DsrB (63 aa).

It belongs to the DsrB family.

This chain is Protein DsrB, found in Yersinia pseudotuberculosis serotype O:1b (strain IP 31758).